The sequence spans 286 residues: Pyridoxal kinase PdxY (286 aa).

Residues Ser-9 and 44-45 contribute to the substrate site; that span reads TQ. Asp-111, Glu-148, and Lys-181 together coordinate ATP. Asp-222 contacts substrate.

This sequence belongs to the pyridoxine kinase family. PdxY subfamily. Homodimer. The cofactor is Mg(2+).

It catalyses the reaction pyridoxal + ATP = pyridoxal 5'-phosphate + ADP + H(+). It functions in the pathway cofactor metabolism; pyridoxal 5'-phosphate salvage; pyridoxal 5'-phosphate from pyridoxal: step 1/1. Pyridoxal kinase involved in the salvage pathway of pyridoxal 5'-phosphate (PLP). Catalyzes the phosphorylation of pyridoxal to PLP. The chain is Pyridoxal kinase PdxY from Actinobacillus pleuropneumoniae serotype 5b (strain L20).